Consider the following 266-residue polypeptide: Small ribosomal subunit protein uS2 (266 aa).

A disordered region spans residues 227-266; that stretch reads GVSFTEETPSEPIQSDSSEEEEGSLDISDLFEDTDLKEEE. A compositionally biased stretch (polar residues) spans 231 to 240; sequence TEETPSEPIQ. Residues 243 to 266 show a composition bias toward acidic residues; it reads SSEEEEGSLDISDLFEDTDLKEEE.

It belongs to the universal ribosomal protein uS2 family.

In Pseudothermotoga lettingae (strain ATCC BAA-301 / DSM 14385 / NBRC 107922 / TMO) (Thermotoga lettingae), this protein is Small ribosomal subunit protein uS2.